The following is a 278-amino-acid chain: Phosphatidylglycerol--prolipoprotein diacylglyceryl transferase (278 aa).

A run of 4 helical transmembrane segments spans residues 12–32 (FGPL…LIGL), 44–64 (LENG…VIGA), 86–106 (IWEG…TLIL), and 113–133 (QPFL…QAIG). Arg134 is a binding site for a 1,2-diacyl-sn-glycero-3-phospho-(1'-sn-glycerol). Transmembrane regions (helical) follow at residues 173–193 (PTFL…LVLF), 203–223 (FPAG…RIWI), and 246–266 (IAQL…WWLK).

It belongs to the Lgt family.

Its subcellular location is the cell inner membrane. It carries out the reaction L-cysteinyl-[prolipoprotein] + a 1,2-diacyl-sn-glycero-3-phospho-(1'-sn-glycerol) = an S-1,2-diacyl-sn-glyceryl-L-cysteinyl-[prolipoprotein] + sn-glycerol 1-phosphate + H(+). It functions in the pathway protein modification; lipoprotein biosynthesis (diacylglyceryl transfer). Functionally, catalyzes the transfer of the diacylglyceryl group from phosphatidylglycerol to the sulfhydryl group of the N-terminal cysteine of a prolipoprotein, the first step in the formation of mature lipoproteins. The polypeptide is Phosphatidylglycerol--prolipoprotein diacylglyceryl transferase (Parasynechococcus marenigrum (strain WH8102)).